The sequence spans 67 residues: MARVTVEDCLEHVKNRFELVMVATKRARQIAVRGDQPMVEWENDKPTVVALREIAEGYVTADILDED.

Belongs to the RNA polymerase subunit omega family. The RNAP catalytic core consists of 2 alpha, 1 beta, 1 beta' and 1 omega subunit. When a sigma factor is associated with the core the holoenzyme is formed, which can initiate transcription.

It carries out the reaction RNA(n) + a ribonucleoside 5'-triphosphate = RNA(n+1) + diphosphate. Promotes RNA polymerase assembly. Latches the N- and C-terminal regions of the beta' subunit thereby facilitating its interaction with the beta and alpha subunits. This is DNA-directed RNA polymerase subunit omega from Legionella pneumophila (strain Paris).